A 246-amino-acid chain; its full sequence is MAGHSKWANIKHRKAAQDAQRGKIFTKLIRELVTAAKIGGGDVSANPRLRAAVDKALSNNMTRDTINRAIDRGVGGGDDTNMETKIYEGYGPGGTAVMVECLSDNANRTISQVRPSFTKCGGNLGTEGSVGYLFSKKGLILIAEADEDALTEAAIEAGADDIQPQDDGSFEIYTAWEDLGSVRDGIEAAGFKVQEAEVTMIPSTTVDLDIETAPKLLRLIDMLEDCDDVQNVYHNGEICDEVASQL.

The protein belongs to the TACO1 family.

The protein localises to the cytoplasm. This Haemophilus influenzae (strain PittEE) protein is Probable transcriptional regulatory protein CGSHiEE_01480.